Here is a 508-residue protein sequence, read N- to C-terminus: Cytochrome P450 monooxygenase lepD (508 aa).

A helical membrane pass occupies residues 22-42 (IAAAVAVVASIVIYLALSSFF). N-linked (GlcNAc...) asparagine glycans are attached at residues Asn-53 and Asn-416. Cys-454 lines the heme pocket.

Belongs to the cytochrome P450 family. The cofactor is heme.

The protein resides in the membrane. Functionally, cytochrome P450 monooxygenase; part of the gene cluster 23 that mediates the biosynthesis of a family of 2-pyridones known as leporins. The hybrid PKS-NRPS synthetase lepA and the enoyl reductase lepG are responsible for fusion of phenylalanine with a hexaketide and subsequent release of the stable tetramic acid precursor, pre-leporin C. Because lepA lacks a designated enoylreductase (ER) domain, the required activity is provided the enoyl reductase lepG. It is possible that the dehydrogenase lepF also participates in production of pre-leporin C. Cytochrome P450 monooxygenase lepH is then required for the ring expansion step to yield leporin C. Leporin C is then presumably further oxidized by the N-hydroxylase lepD to form leporin B. LepI may possess a function in biosynthesis upstream of lepA. Leporin B is further oxidized in the presence of ferric ion to give the leporin B trimer-iron chelate, but whether or not this reaction is catalyzed by an enzyme in the pathway or by ferric ion is not determined yet. This Aspergillus flavus (strain ATCC 200026 / FGSC A1120 / IAM 13836 / NRRL 3357 / JCM 12722 / SRRC 167) protein is Cytochrome P450 monooxygenase lepD.